A 602-amino-acid chain; its full sequence is Isocitrate dehydrogenase kinase/phosphatase (602 aa).

Residues 325-331 (APGIKGM) and Lys-346 each bind ATP. The active site involves Asp-381.

This sequence belongs to the AceK family.

The protein localises to the cytoplasm. The catalysed reaction is L-seryl-[isocitrate dehydrogenase] + ATP = O-phospho-L-seryl-[isocitrate dehydrogenase] + ADP + H(+). In terms of biological role, bifunctional enzyme which can phosphorylate or dephosphorylate isocitrate dehydrogenase (IDH) on a specific serine residue. This is a regulatory mechanism which enables bacteria to bypass the Krebs cycle via the glyoxylate shunt in response to the source of carbon. When bacteria are grown on glucose, IDH is fully active and unphosphorylated, but when grown on acetate or ethanol, the activity of IDH declines drastically concomitant with its phosphorylation. This is Isocitrate dehydrogenase kinase/phosphatase from Paracidovorax citrulli (strain AAC00-1) (Acidovorax citrulli).